A 25-amino-acid polypeptide reads, in one-letter code: Oxyopinin-3c (25 aa).

In terms of tissue distribution, expressed by the venom gland.

It is found in the secreted. Its function is as follows. May have cytolytic and antimicrobial activity. The chain is Oxyopinin-3c from Oxyopes takobius (Lynx spider).